We begin with the raw amino-acid sequence, 212 residues long: Protein Nef (212 aa).

Residue Gly-2 is the site of N-myristoyl glycine; by host attachment. Ser-6 carries the phosphoserine; by host modification. The segment at 67–71 (EEEEE) is acidic; interacts with host PACS1 and PACS2; stabilizes the interaction of NEF/MHC-I with host AP1M1; necessary for MHC-I internalization. The SH3-binding; interaction with Src family tyrosine kinases stretch occupies residues 75–84 (PVRPQVPLRP). The PxxP; stabilizes the interaction of NEF/MHC-I with host AP1M1; necessary for MHC-I internalization signature appears at 78–81 (PQVP). The mediates dimerization, Nef-PTE1 interaction stretch occupies residues 114-130 (DILDLWMYHTQGILPDW). Residues 154–186 (LSAEEVEEANEGDNNALLHPICQHGADDDHKEV) form a binding to ATP6V1H region. Residues 170–171 (LL) carry the Dileucine internalization motif; necessary for CD4 internalization motif. Residues 180-181 (DD) carry the Diacidic; necessary for CD4 internalization motif.

The protein belongs to the lentivirus primate group Nef protein family. Monomer; cytosolic form. Homodimer; membrane bound form. Interacts with Nef associated p21-activated kinase (PAK2); this interaction activates PAK2. Associates with the Nef-MHC-I-AP1 complex; this complex is required for MHC-I internalization. Interacts (via C-terminus) with host PI3-kinase. Interacts with host PACS1; this interaction seems to be weak. Interacts with host PACS2. Interacts with host LCK and MAPK3; these interactions inhibit the kinase activity of the latter. Interacts with host ATP6V1H; this interaction may play a role in CD4 endocytosis. Associates with the CD4-Nef-AP2 complex; this complex is required for CD4 internalization. Interacts with host AP2 subunit alpha and AP2 subunit sigma2. Interacts with TCR-zeta chain; this interaction up-regulates the Fas ligand (FasL) surface expression. Interacts with host HCK, LYN, and SRC; these interactions activate the Src family kinases. Interacts with MAP3K5; this interaction inhibits the Fas and TNFR-mediated death signals. Interacts with beta-COP and PTE1. Interacts with human RACK1; this increases Nef phosphorylation by PKC. Interacts with TP53; this interaction decreases the half-life of TP53, protecting the infected cell against p53-mediated apoptosis. In terms of processing, the virion-associated Nef proteins are cleaved by the viral protease to release the soluble C-terminal core protein. Nef is probably cleaved concomitantly with viral structural proteins on maturation of virus particles. Myristoylated. Post-translationally, phosphorylated on serine residues, probably by host PKCdelta and theta.

Its subcellular location is the host cell membrane. It localises to the virion. It is found in the secreted. The protein localises to the host Golgi apparatus membrane. Functionally, factor of infectivity and pathogenicity, required for optimal virus replication. Alters numerous pathways of T-lymphocyte function and down-regulates immunity surface molecules in order to evade host defense and increase viral infectivity. Alters the functionality of other immunity cells, like dendritic cells, monocytes/macrophages and NK cells. In terms of biological role, in infected CD4(+) T-lymphocytes, down-regulates the surface MHC-I, mature MHC-II, CD4, CD28, CCR5 and CXCR4 molecules. Mediates internalization and degradation of host CD4 through the interaction of with the cytoplasmic tail of CD4, the recruitment of AP-2 (clathrin adapter protein complex 2), internalization through clathrin coated pits, and subsequent transport to endosomes and lysosomes for degradation. Diverts host MHC-I molecules to the trans-Golgi network-associated endosomal compartments by an endocytic pathway to finally target them for degradation. MHC-I down-regulation may involve AP-1 (clathrin adapter protein complex 1) or possibly Src family kinase-ZAP70/Syk-PI3K cascade recruited by PACS2. In consequence infected cells are masked for immune recognition by cytotoxic T-lymphocytes. Decreasing the number of immune receptors also prevents reinfection by more HIV particles (superinfection). Down-regulates host SERINC3 and SERINC5 thereby excluding these proteins from the viral particles. Virion infectivity is drastically higher when SERINC3 or SERINC5 are excluded from the viral envelope, because these host antiviral proteins impair the membrane fusion event necessary for subsequent virion penetration. Bypasses host T-cell signaling by inducing a transcriptional program nearly identical to that of anti-CD3 cell activation. Interaction with TCR-zeta chain up-regulates the Fas ligand (FasL). Increasing surface FasL molecules and decreasing surface MHC-I molecules on infected CD4(+) cells send attacking cytotoxic CD8+ T-lymphocytes into apoptosis. Its function is as follows. Plays a role in optimizing the host cell environment for viral replication without causing cell death by apoptosis. Protects the infected cells from apoptosis in order to keep them alive until the next virus generation is ready to strike. Inhibits the Fas and TNFR-mediated death signals by blocking MAP3K5/ASK1. Decreases the half-life of TP53, protecting the infected cell against p53-mediated apoptosis. Inhibits the apoptotic signals regulated by the Bcl-2 family proteins through the formation of a Nef/PI3-kinase/PAK2 complex that leads to activation of PAK2 and induces phosphorylation of host BAD. Functionally, extracellular Nef protein targets CD4(+) T-lymphocytes for apoptosis by interacting with CXCR4 surface receptors. The protein is Protein Nef of Human immunodeficiency virus type 1 group N (isolate YBF30) (HIV-1).